The sequence spans 152 residues: Putative RING finger protein 157L (152 aa).

An RING-type zinc finger spans residues 111-146 (CVVCYENEICIKIQPCNHFVVCKSCFNRLNTCPMCR).

The protein belongs to the IIV-6 157L family.

This Invertebrate iridescent virus 6 (IIV-6) protein is Putative RING finger protein 157L.